Here is a 453-residue protein sequence, read N- to C-terminus: Bis(5'-adenosyl)-triphosphatase ENPP4 (453 aa).

The first 18 residues, 1 to 18, serve as a signal peptide directing secretion; sequence MKLLLMLLFSGLMTGCRG. Residues 19 to 407 are Extracellular-facing; the sequence is NSSSASPPKL…DQWCINLPEA (389 aa). The Zn(2+) site is built by aspartate 34 and threonine 70. The active-site AMP-threonine intermediate is the threonine 70. Substrate is bound by residues asparagine 91 and tyrosine 154. Asparagine 166 is a glycosylation site (N-linked (GlcNAc...) asparagine). Zn(2+) contacts are provided by aspartate 189, histidine 193, aspartate 237, and histidine 238. Aspartate 189 is a binding site for substrate. Cysteine 254 and cysteine 287 are disulfide-bonded. Asparagine 276 is a glycosylation site (N-linked (GlcNAc...) asparagine). Histidine 336 lines the Zn(2+) pocket. A disulfide bridge connects residues cysteine 394 and cysteine 401. Residues 408–428 form a helical membrane-spanning segment; sequence IGIVIGALLVLTTLTCLIIIM. At 429-453 the chain is on the cytoplasmic side; sequence QNRVSGPRPFSRLQLQEDDDDPLIG.

This sequence belongs to the nucleotide pyrophosphatase/phosphodiesterase family. Requires Zn(2+) as cofactor.

It is found in the cell membrane. The catalysed reaction is P(1),P(3)-bis(5'-adenosyl) triphosphate + H2O = AMP + ADP + 2 H(+). Functionally, hydrolyzes extracellular Ap3A into AMP and ADP, and Ap4A into AMP and ATP. Ap3A and Ap4A are diadenosine polyphosphates thought to induce proliferation of vascular smooth muscle cells. Acts as a procoagulant, mediating platelet aggregation at the site of nascent thrombus via release of ADP from Ap3A and activation of ADP receptors. In Bos taurus (Bovine), this protein is Bis(5'-adenosyl)-triphosphatase ENPP4 (ENPP4).